The sequence spans 208 residues: Harpin secretion protein HrpW (208 aa).

Helical transmembrane passes span 2–22 (LALF…CTAF), 46–66 (ALYG…AHDI), 149–169 (IGFL…NLLL), and 176–196 (VSPM…VSGW).

Belongs to the FliP/MopC/SpaP family.

It localises to the cell membrane. In terms of biological role, required for the secretion of harpin. This Pseudomonas syringae pv. syringae protein is Harpin secretion protein HrpW (hrpW).